A 1609-amino-acid polypeptide reads, in one-letter code: Chitin synthase 5 (1609 aa).

Disordered stretches follow at residues 1-188, 248-280, and 294-320; these read MNPF…DRER, SGLG…GRDE, and VSLR…ESKT. Residues 1–326 lie on the Cytoplasmic side of the membrane; that stretch reads MNPFESLPDA…ESKTSRIAPG (326 aa). Residues 34–44 are compositionally biased toward polar residues; the sequence is PGSTGRPQNPI. Low complexity predominate over residues 61-82; the sequence is PQQQQQQQQQQQQQQQRSQQPF. Residues 100-111 show a composition bias toward polar residues; that stretch reads AYLNSTSSQPTQ. Residues 134-146 are compositionally biased toward basic and acidic residues; the sequence is DSVKSYGDDKRSI. Polar residues predominate over residues 147–163; sequence NDPNSSSTALTQVNSLD. Positions 253–267 are enriched in low complexity; the sequence is TGPTNVPPGGLGRAP. The span at 307–320 shows a compositional bias: basic and acidic residues; the sequence is PSKEVPRDLGESKT. Residues 327 to 347 form a helical membrane-spanning segment; sequence PVGGWMIYCYILTICCPGPFL. The Extracellular portion of the chain corresponds to 348 to 364; that stretch reads RIFGIRTPEQQRAWREK. A helical membrane pass occupies residues 365–385; sequence MGLIGIITLIMAAVGFLTFGF. Residues 386–624 are Cytoplasmic-facing; that stretch reads TQTVCGQQPD…ASKVELYLSL (239 aa). Residues 625-645 traverse the membrane as a helical segment; that stretch reads VFIIGVVAIKFFMAVMFGWFI. The Extracellular segment spans residues 646–1176; it reads SWRLGNYANE…MRFVVFMELT (531 aa). Asn654 carries an N-linked (GlcNAc...) asparagine glycan. The disordered stretch occupies residues 729 to 767; the sequence is GVASPLGGSPPGSPSVAGGRSSASLAPAHSRRSSFSGSP. A compositionally biased stretch (low complexity) spans 742-752; that stretch reads PSVAGGRSSAS. Asn1015 and Asn1144 each carry an N-linked (GlcNAc...) asparagine glycan. Residues 1177–1197 form a helical membrane-spanning segment; the sequence is GTLVLPAAIAFTLYVVVQAFL. The Cytoplasmic segment spans residues 1198–1202; sequence PNVPT. The chain crosses the membrane as a helical span at residues 1203 to 1223; it reads PTIPLILLALILGLPGILIVV. Residues 1224 to 1227 lie on the Extracellular side of the membrane; sequence TSRK. A helical transmembrane segment spans residues 1228–1248; the sequence is IAYVGWMLIYLLSLPIWNFVL. Topologically, residues 1249 to 1609 are cytoplasmic; the sequence is PLYAYWHMDD…PPGAAPPSFD (361 aa). Disordered stretches follow at residues 1354-1381 and 1399-1609; these read PNAM…PSGA and TDAK…PSFD. 2 stretches are compositionally biased toward polar residues: residues 1502–1514 and 1530–1552; these read NVST…TVSE and GSAS…QTRP. Over residues 1568–1588 the composition is skewed to low complexity; that stretch reads AQGVRQVQRGARRSQMPNSAA.

It belongs to the chitin synthase family. Class IV subfamily.

The protein resides in the cell membrane. The protein localises to the cytoplasmic vesicle membrane. The enzyme catalyses [(1-&gt;4)-N-acetyl-beta-D-glucosaminyl](n) + UDP-N-acetyl-alpha-D-glucosamine = [(1-&gt;4)-N-acetyl-beta-D-glucosaminyl](n+1) + UDP + H(+). In terms of biological role, polymerizes chitin, a structural polymer of the cell wall and septum, by transferring the sugar moiety of UDP-GlcNAc to the non-reducing end of the growing chitin polymer. The chain is Chitin synthase 5 from Mycosarcoma maydis (Corn smut fungus).